The sequence spans 166 residues: Ribosome maturation factor RimP (166 aa).

It belongs to the RimP family.

It is found in the cytoplasm. In terms of biological role, required for maturation of 30S ribosomal subunits. This is Ribosome maturation factor RimP from Psychrobacter sp. (strain PRwf-1).